The primary structure comprises 173 residues: Translation initiation factor IF-3 (173 aa).

This sequence belongs to the IF-3 family. In terms of assembly, monomer.

It localises to the cytoplasm. Functionally, IF-3 binds to the 30S ribosomal subunit and shifts the equilibrium between 70S ribosomes and their 50S and 30S subunits in favor of the free subunits, thus enhancing the availability of 30S subunits on which protein synthesis initiation begins. The sequence is that of Translation initiation factor IF-3 from Neisseria gonorrhoeae (strain ATCC 700825 / FA 1090).